The chain runs to 274 residues: Formamidopyrimidine-DNA glycosylase (274 aa).

Pro2 acts as the Schiff-base intermediate with DNA in catalysis. Glu3 serves as the catalytic Proton donor. The active-site Proton donor; for beta-elimination activity is the Lys57. DNA is bound by residues His92, Arg111, and Lys152. The FPG-type zinc-finger motif lies at 237-271 (QVYGRKGEECNDCGSIIEAKVIGQRNSFYCPKCQR). The Proton donor; for delta-elimination activity role is filled by Arg261.

Belongs to the FPG family. As to quaternary structure, monomer. Zn(2+) is required as a cofactor.

It carries out the reaction Hydrolysis of DNA containing ring-opened 7-methylguanine residues, releasing 2,6-diamino-4-hydroxy-5-(N-methyl)formamidopyrimidine.. It catalyses the reaction 2'-deoxyribonucleotide-(2'-deoxyribose 5'-phosphate)-2'-deoxyribonucleotide-DNA = a 3'-end 2'-deoxyribonucleotide-(2,3-dehydro-2,3-deoxyribose 5'-phosphate)-DNA + a 5'-end 5'-phospho-2'-deoxyribonucleoside-DNA + H(+). Its function is as follows. Involved in base excision repair of DNA damaged by oxidation or by mutagenic agents. Acts as a DNA glycosylase that recognizes and removes damaged bases. Has a preference for oxidized purines, such as 7,8-dihydro-8-oxoguanine (8-oxoG). Has AP (apurinic/apyrimidinic) lyase activity and introduces nicks in the DNA strand. Cleaves the DNA backbone by beta-delta elimination to generate a single-strand break at the site of the removed base with both 3'- and 5'-phosphates. The chain is Formamidopyrimidine-DNA glycosylase from Glaesserella parasuis serovar 5 (strain SH0165) (Haemophilus parasuis).